A 351-amino-acid polypeptide reads, in one-letter code: Transcription factor bHLH93 (351 aa).

The region spanning 174–223 (GQPSKNLMAERRRRKRLNDRLSMLRSIVPKISKMDRTSILGDAIDYMKEL) is the bHLH domain.

In terms of assembly, homodimer. Interacts with FAMA. Broadly expressed.

It localises to the nucleus. Its function is as follows. Transcription factor. May be involved in the differentiation of stomatal guard cells. The sequence is that of Transcription factor bHLH93 (BHLH93) from Arabidopsis thaliana (Mouse-ear cress).